We begin with the raw amino-acid sequence, 286 residues long: Aquaporin PIP2-4 (286 aa).

A run of 2 helical transmembrane segments spans residues 40–60 (ALIA…ATVI) and 77–97 (CGGV…FILV). An NPA 1 motif is present at residues 109–111 (NPA). Transmembrane regions (helical) follow at residues 128 to 148 (LLYM…VKGF), 170 to 190 (GTGL…VFSA), and 204 to 224 (VLAP…TIPI). An NPA 2 motif is present at residues 230 to 232 (NPA). The chain crosses the membrane as a helical span at residues 252-272 (IFWVGPFIGAAIAALYHQVIL).

The protein belongs to the MIP/aquaporin (TC 1.A.8) family. PIP (TC 1.A.8.11) subfamily. Expressed in roots.

Its subcellular location is the cell membrane. Water channel required to facilitate the transport of water across cell membrane. May play a role in root water uptake. This is Aquaporin PIP2-4 (PIP2-4) from Oryza sativa subsp. japonica (Rice).